The chain runs to 171 residues: O-acetyl-ADP-ribose deacetylase 2 (171 aa).

The 171-residue stretch at 1 to 171 (MNKITVIQGD…NYDLYLKLLN (171 aa)) folds into the Macro domain. Substrate contacts are provided by residues 10-11 (DI), asparagine 24, 32-34 (GVD), and 121-125 (STGIY). Aspartate 34 (proton acceptor) is an active-site residue.

Belongs to the MacroD-type family. YmdB subfamily. Homodimer. Interacts with RNase III.

It carries out the reaction 3''-O-acetyl-ADP-D-ribose + H2O = ADP-D-ribose + acetate + H(+). It catalyses the reaction 2''-O-acetyl-ADP-D-ribose + H2O = ADP-D-ribose + acetate + H(+). Functionally, deacetylates O-acetyl-ADP ribose to yield ADP-ribose and free acetate. Down-regulates ribonuclease 3 (RNase III) activity. Acts by interacting directly with the region of the ribonuclease that is required for dimerization/activation. The sequence is that of O-acetyl-ADP-ribose deacetylase 2 from Pantoea vagans (strain C9-1) (Pantoea agglomerans (strain C9-1)).